A 103-amino-acid polypeptide reads, in one-letter code: Somatostatin-2 (103 aa).

The signal sequence occupies residues 1–21; the sequence is MLGSAGTLLLLLLAWGARALS. Positions 22-87 are excised as a propeptide; the sequence is QPDDNRITTG…VKFPRLSLRE (66 aa). The cysteines at positions 92 and 103 are disulfide-linked.

It belongs to the somatostatin family.

It is found in the secreted. Its function is as follows. Somatostatin inhibits the release of somatotropin. This chain is Somatostatin-2 (sst2), found in Pelophylax ridibundus (Marsh frog).